Reading from the N-terminus, the 60-residue chain is Small ribosomal subunit protein bS21 (60 aa).

The disordered stretch occupies residues 36 to 60; sequence QFFETPQEKHKRKEATRRRQRSRRR. Over residues 44-60 the composition is skewed to basic residues; it reads KHKRKEATRRRQRSRRR.

Belongs to the bacterial ribosomal protein bS21 family.

The sequence is that of Small ribosomal subunit protein bS21 (rpsU) from Synechocystis sp. (strain ATCC 27184 / PCC 6803 / Kazusa).